Reading from the N-terminus, the 211-residue chain is Pyridoxine/pyridoxamine 5'-phosphate oxidase (211 aa).

Residues 7–10 (RREY) and Lys65 each bind substrate. Residues 60–65 (RIVLLK), 75–76 (YT), Arg81, Lys82, and Gln104 each bind FMN. Residues Tyr122, Arg126, and Ser130 each coordinate substrate. FMN is bound by residues 139 to 140 (QS) and Trp184. 190–192 (RLH) lines the substrate pocket. Position 194 (Arg194) interacts with FMN.

Belongs to the pyridoxamine 5'-phosphate oxidase family. In terms of assembly, homodimer. It depends on FMN as a cofactor.

The enzyme catalyses pyridoxamine 5'-phosphate + O2 + H2O = pyridoxal 5'-phosphate + H2O2 + NH4(+). It catalyses the reaction pyridoxine 5'-phosphate + O2 = pyridoxal 5'-phosphate + H2O2. It functions in the pathway cofactor metabolism; pyridoxal 5'-phosphate salvage; pyridoxal 5'-phosphate from pyridoxamine 5'-phosphate: step 1/1. The protein operates within cofactor metabolism; pyridoxal 5'-phosphate salvage; pyridoxal 5'-phosphate from pyridoxine 5'-phosphate: step 1/1. Its function is as follows. Catalyzes the oxidation of either pyridoxine 5'-phosphate (PNP) or pyridoxamine 5'-phosphate (PMP) into pyridoxal 5'-phosphate (PLP). The polypeptide is Pyridoxine/pyridoxamine 5'-phosphate oxidase (Vibrio atlanticus (strain LGP32) (Vibrio splendidus (strain Mel32))).